The sequence spans 438 residues: 3-phosphoshikimate 1-carboxyvinyltransferase (438 aa).

Residues Lys20, Ser21, and Arg25 each contribute to the 3-phosphoshikimate site. Residue Lys20 participates in phosphoenolpyruvate binding. Residues Gly90 and Arg118 each contribute to the phosphoenolpyruvate site. Residues Ser163, Ser164, Gln165, Ser191, Asp320, and Lys347 each coordinate 3-phosphoshikimate. Gln165 is a binding site for phosphoenolpyruvate. Catalysis depends on Asp320, which acts as the Proton acceptor. Phosphoenolpyruvate contacts are provided by Arg351 and Arg392.

It belongs to the EPSP synthase family. Monomer.

The protein resides in the cytoplasm. The catalysed reaction is 3-phosphoshikimate + phosphoenolpyruvate = 5-O-(1-carboxyvinyl)-3-phosphoshikimate + phosphate. It functions in the pathway metabolic intermediate biosynthesis; chorismate biosynthesis. Catalyzes the transfer of the enolpyruvyl moiety of phosphoenolpyruvate (PEP) to the 5-hydroxyl of shikimate-3-phosphate (S3P) to produce enolpyruvyl shikimate-3-phosphate and inorganic phosphate. This Natronomonas pharaonis (strain ATCC 35678 / DSM 2160 / CIP 103997 / JCM 8858 / NBRC 14720 / NCIMB 2260 / Gabara) (Halobacterium pharaonis) protein is 3-phosphoshikimate 1-carboxyvinyltransferase.